Reading from the N-terminus, the 1132-residue chain is MESQQDEAVQTKGASTSSDAQDQGAEKGAKNKTTEATEGPTSEPPLSGPGRLKKTAMKLFGGKKGICTLPSFFGGGRSKGSGKVSSKKSLNKSKTHDGLSEASQGPEDVVIEETDLSTPLSKSSAQFPSSQSANGALEIGSKHKTSGTEAIEKAGVEKVPSVHKPKKSLKSFFSSIRRHRKGKTSGADQSVPGAKELEGARTRSHEHVSSISLPSSEEIFRDTRKENAKPQDAPGPKMSPAQVHFSPTTEKAACKNPEKLTRTCASEFMQPKPVLEGGSLEEPHTSETEGKVVAGEVNPPNGPVGDQLSLLFGDVTSLKSFDSLTGCGDIIAEQDMDSMTDSMASGGQRANRDGTKRSSCLVTYQGGGEEMALPDDDDNDDEEEEEEEEEEEEEEEEEEEEEEEEEEEELLEDEEEVKDGEENDDLEYLWASAQIYPRFNMNLGYHTAISPSHQGYMLLDPVQSYPNLGLGELLTPQSDQQESAPNSDEGYYDSTTPGFEDDSGEALGLAHRDCLPRDSYSGDALYEFYEPDDSLEHSPPGDDCLYDLRGRNSEMLDPFLNLEPFSSRPPGAMETEEERLVTIQKQLLYWELRREQREAQEACAREAHAREAYARDTHTRESYGRNVRARETQALEAHSQEGRVQETKVRQEKPALEYQMRPLGPSVMGLVAGTSGGSQTSHRGTTSAFPATSSSEPDWRDFRPLEKRFEGTCSKKDQSTCLMQLFQSDAMFEPDMQEANFGGSPRKAYPSYSPPEEPEEEEEEKEGNATVSFSQALVEFTSNGNLFTSMSYSSDSDSSFTQNLPELPPMVTFDIADVERDGEGKCEENPEFNNDEDLTASLEAFELGYYHKHAFNSYHSRFYQGLPWGVSSLPRYLGLPGVHPRPPPAAMALNRRSRSLDNAESLELELSSSHLAQGYMESDELQAHQEDSDEEGEEEEGEWGRDSPLSLYTEPPGVYDWPPWAHCPLPVGPGLAWMSPNQLYEPFNQSSYVQATCCVPPVAMPVSVPGRTPGDSVSQLARPSHLPLPMGPCYNLQSQASQSGRAKPRDVLLPVDEPSCSSISGANSQSQAKPVGITHGIPQLPRVRPEPFQLQPNHYRASNLDLSKERGEQGASLSTSYSSTAMNGNLAK.

Residue Met-1 is modified to N-acetylmethionine. Over residues 1–21 (MESQQDEAVQTKGASTSSDAQ) the composition is skewed to polar residues. Disordered stretches follow at residues 1–256 (MESQ…ACKN), 268–301 (FMQP…NPPN), 338–423 (SMTD…GEEN), 469–505 (GLGE…DSGE), 674–699 (TSGG…EPDW), 736–770 (MQEA…GNAT), 924–949 (ELQA…DSPL), and 1038–1132 (SQAS…NLAK). Positions 24 to 35 (GAEKGAKNKTTE) are enriched in basic and acidic residues. The segment covering 121 to 133 (SKSSAQFPSSQSA) has biased composition (low complexity). Basic and acidic residues-rich tracts occupy residues 195–208 (KELE…HEHV), 218–229 (EIFRDTRKENAK), and 281–290 (EEPHTSETEG). A compositionally biased stretch (acidic residues) spans 372-423 (ALPDDDDNDDEEEEEEEEEEEEEEEEEEEEEEEEEEEELLEDEEEVKDGEEN). Polar residues-rich tracts occupy residues 475 to 486 (TPQSDQQESAPN) and 677 to 696 (GSQT…SSSE). 2 stretches are compositionally biased toward acidic residues: residues 756-765 (EEPEEEEEEK) and 931-941 (DSDEEGEEEEG). Polar residues-rich tracts occupy residues 1059-1072 (SCSS…QSQA) and 1115-1132 (ASLS…NLAK).

It belongs to the Amer family. Interacts with CTNNB1, AXIN1, LRP6, KEAP1, APC and BTRC. Interacts with SCF (SKP1-CUL1-F-box protein) E3 ubiquitin-protein ligase complexes containing BTRC and/or FBXW11. Identified in the beta-catenin destruction complex containing CTNNB1, APC, AXIN1 and AXIN2. Interacts with WT1. In terms of tissue distribution, expressed in kidney.

It is found in the cytoplasm. The protein resides in the cell membrane. The protein localises to the nucleus. Functionally, regulator of the canonical Wnt signaling pathway. Acts by specifically binding phosphatidylinositol 4,5-bisphosphate (PtdIns(4,5)P2), translocating to the cell membrane and interacting with key regulators of the canonical Wnt signaling pathway, such as components of the beta-catenin destruction complex. Acts both as a positive and negative regulator of the Wnt signaling pathway, depending on the context: acts as a positive regulator by promoting LRP6 phosphorylation. Also acts as a negative regulator by acting as a scaffold protein for the beta-catenin destruction complex and promoting stabilization of Axin at the cell membrane. Promotes CTNNB1 ubiquitination and degradation. Involved in kidney development. The chain is APC membrane recruitment protein 1 (Amer1) from Mus musculus (Mouse).